A 396-amino-acid polypeptide reads, in one-letter code: S-adenosylmethionine synthase 1 (396 aa).

Position 13 (Glu13) interacts with Mg(2+). Residue His19 participates in ATP binding. Glu47 contributes to the K(+) binding site. L-methionine is bound by residues Glu60 and Gln103. ATP-binding positions include 171–173 (DGK), 239–242 (SGRF), Asp250, 256–257 (RK), Ala273, Lys277, and Lys281. Asp250 is an L-methionine binding site. Lys281 provides a ligand contact to L-methionine.

The protein belongs to the AdoMet synthase family. In terms of assembly, homotetramer. Requires Mn(2+) as cofactor. Mg(2+) serves as cofactor. It depends on Co(2+) as a cofactor. The cofactor is K(+).

Its subcellular location is the cytoplasm. It catalyses the reaction L-methionine + ATP + H2O = S-adenosyl-L-methionine + phosphate + diphosphate. Its pathway is amino-acid biosynthesis; S-adenosyl-L-methionine biosynthesis; S-adenosyl-L-methionine from L-methionine: step 1/1. Functionally, catalyzes the formation of S-adenosylmethionine from methionine and ATP. The reaction comprises two steps that are both catalyzed by the same enzyme: formation of S-adenosylmethionine (AdoMet) and triphosphate, and subsequent hydrolysis of the triphosphate. May be involved in the synthesis of betain in response to abiotic stress such as high salinity. The protein is S-adenosylmethionine synthase 1 (SAMS1) of Beta vulgaris (Sugar beet).